The following is a 131-amino-acid chain: MPKRTSLQNMGEAGEACVRQYLEEQGWQILAQQWRCRWGELDLVASRAGELIFVEVKTRSGQGWDQKGLLAVGIQKQQRLIRAAQAFLSQHPDLAELACRFDVALVEQRPGKEGVSYALADYLQGAFELWE.

The protein belongs to the UPF0102 family.

The sequence is that of UPF0102 protein CYA_0708 from Synechococcus sp. (strain JA-3-3Ab) (Cyanobacteria bacterium Yellowstone A-Prime).